Here is a 164-residue protein sequence, read N- to C-terminus: Peptide deformylase (164 aa).

Residues C87 and H129 each contribute to the Fe cation site. E130 is a catalytic residue. Fe cation is bound at residue H133.

Belongs to the polypeptide deformylase family. Requires Fe(2+) as cofactor.

The catalysed reaction is N-terminal N-formyl-L-methionyl-[peptide] + H2O = N-terminal L-methionyl-[peptide] + formate. Functionally, removes the formyl group from the N-terminal Met of newly synthesized proteins. Requires at least a dipeptide for an efficient rate of reaction. N-terminal L-methionine is a prerequisite for activity but the enzyme has broad specificity at other positions. The chain is Peptide deformylase from Thermotoga sp. (strain RQ2).